Reading from the N-terminus, the 312-residue chain is Malate dehydrogenase (312 aa).

Residues glycine 7–glycine 13 and aspartate 34 contribute to the NAD(+) site. Substrate is bound by residues arginine 81 and arginine 87. NAD(+) contacts are provided by residues asparagine 94 and isoleucine 117–asparagine 119. Substrate is bound by residues asparagine 119 and arginine 153. The Proton acceptor role is filled by histidine 177. Methionine 227 provides a ligand contact to NAD(+).

The protein belongs to the LDH/MDH superfamily. MDH type 1 family. As to quaternary structure, homodimer.

It carries out the reaction (S)-malate + NAD(+) = oxaloacetate + NADH + H(+). Functionally, catalyzes the reversible oxidation of malate to oxaloacetate. In Moritella marina (Vibrio marinus), this protein is Malate dehydrogenase.